Reading from the N-terminus, the 438-residue chain is Enolase (438 aa).

Positions 159 and 168 each coordinate substrate. Catalysis depends on E211, which acts as the Proton donor. Residues D246, E297, and D322 each contribute to the Mg(2+) site. Substrate contacts are provided by E297 and D322. K347 (proton acceptor) is an active-site residue. Substrate is bound by residues 374–377 (SHRS) and K398.

This sequence belongs to the enolase family. In terms of assembly, homodimer. Mg(2+) serves as cofactor.

The protein localises to the cytoplasm. The enzyme catalyses (2R)-2-phosphoglycerate = phosphoenolpyruvate + H2O. The protein operates within carbohydrate degradation; glycolysis; pyruvate from D-glyceraldehyde 3-phosphate: step 4/5. The sequence is that of Enolase (enoA) from Aspergillus fumigatus (strain ATCC MYA-4609 / CBS 101355 / FGSC A1100 / Af293) (Neosartorya fumigata).